A 200-amino-acid polypeptide reads, in one-letter code: Ciliary microtubule inner protein 2C (200 aa).

The protein belongs to the CIMIP2 family. In terms of assembly, microtubule inner protein component of sperm flagellar doublet microtubules.

The protein localises to the cytoplasm. Its subcellular location is the cytoskeleton. It localises to the cilium axoneme. It is found in the flagellum axoneme. Its function is as follows. Microtubule inner protein (MIP) part of the dynein-decorated doublet microtubules (DMTs) in cilia axoneme, which is required for motile cilia beating. Binds to the intra-tubulin interfaces. In Mus musculus (Mouse), this protein is Ciliary microtubule inner protein 2C (Cimip2c).